Here is a 309-residue protein sequence, read N- to C-terminus: Type II methyltransferase M.HgiDI (309 aa).

The SAM-dependent MTase C5-type domain occupies 1 to 297 (MKTIDLFAGC…TSLQAYLNQP (297 aa)). Cys-75 is a catalytic residue.

Belongs to the class I-like SAM-binding methyltransferase superfamily. C5-methyltransferase family.

It catalyses the reaction a 2'-deoxycytidine in DNA + S-adenosyl-L-methionine = a 5-methyl-2'-deoxycytidine in DNA + S-adenosyl-L-homocysteine + H(+). A methylase that recognizes the double-stranded sequence 5'-GRCGYC-3', methylates C-? on both strands, and protects the DNA from cleavage by the HgiDI endonuclease. This Herpetosiphon aurantiacus (Herpetosiphon giganteus) protein is Type II methyltransferase M.HgiDI.